We begin with the raw amino-acid sequence, 187 residues long: UPF0340 protein SP_0663 (187 aa).

This sequence belongs to the UPF0340 family.

This is UPF0340 protein SP_0663 from Streptococcus pneumoniae serotype 4 (strain ATCC BAA-334 / TIGR4).